The following is a 121-amino-acid chain: NADH-quinone oxidoreductase subunit A 2 (121 aa).

Transmembrane regions (helical) follow at residues 6 to 26, 60 to 80, and 89 to 109; these read FLPVLFMVTGIVLVAAATLFV, VPFFILAILLVVFDVEAMFLF, and IGFVGYIEMFVFMLLLLVGFA.

This sequence belongs to the complex I subunit 3 family. As to quaternary structure, NDH-1 is composed of 14 different subunits. Subunits NuoA, H, J, K, L, M, N constitute the membrane sector of the complex.

The protein localises to the cell inner membrane. It catalyses the reaction a quinone + NADH + 5 H(+)(in) = a quinol + NAD(+) + 4 H(+)(out). NDH-1 shuttles electrons from NADH, via FMN and iron-sulfur (Fe-S) centers, to quinones in the respiratory chain. The immediate electron acceptor for the enzyme in this species is believed to be ubiquinone. Couples the redox reaction to proton translocation (for every two electrons transferred, four hydrogen ions are translocated across the cytoplasmic membrane), and thus conserves the redox energy in a proton gradient. This Rhizobium meliloti (strain 1021) (Ensifer meliloti) protein is NADH-quinone oxidoreductase subunit A 2.